Consider the following 290-residue polypeptide: Enoyl-CoA hydratase, mitochondrial (290 aa).

The N-terminal 27 residues, 1 to 27 (MAALRALLPRVRAPLRPWLFCPVQRSF), are a transit peptide targeting the mitochondrion. Substrate contacts are provided by residues 98 to 101 (ADIK) and Gly141. N6-acetyllysine; alternate is present on Lys101. Lys101 bears the N6-succinyllysine; alternate mark. Residue Lys204 is modified to N6-succinyllysine. Lys211 is subject to N6-acetyllysine.

The protein belongs to the enoyl-CoA hydratase/isomerase family. In terms of assembly, homohexamer; dimer of trimers.

Its subcellular location is the mitochondrion matrix. It catalyses the reaction a (3S)-3-hydroxyacyl-CoA = a (2E)-enoyl-CoA + H2O. The catalysed reaction is a (3E)-enoyl-CoA = a 4-saturated (2E)-enoyl-CoA. The enzyme catalyses (3E)-hexenoyl-CoA = (2E)-hexenoyl-CoA. It carries out the reaction (3S)-3-hydroxybutanoyl-CoA = (2E)-butenoyl-CoA + H2O. It catalyses the reaction 3-hydroxyisovaleryl-CoA = 3-methylbut-2-enoyl-CoA + H2O. The catalysed reaction is 3-hydroxypropanoyl-CoA = acryloyl-CoA + H2O. The enzyme catalyses 3-hydroxybutanoyl-CoA = (2E)-butenoyl-CoA + H2O. It carries out the reaction 2-methylpropenoyl-CoA + H2O = (S)-3-hydroxyisobutanoyl-CoA. It catalyses the reaction (3S)-hydroxyhexanoyl-CoA = (2E)-hexenoyl-CoA + H2O. The catalysed reaction is (3S)-hydroxydecanoyl-CoA = (2E)-decenoyl-CoA + H2O. It functions in the pathway lipid metabolism; fatty acid beta-oxidation. Its function is as follows. Converts unsaturated trans-2-enoyl-CoA species ((2E)-enoyl-CoA) to the corresponding 3(S)-3-hydroxyacyl-CoA species through addition of a water molecule to the double bond. Catalyzes the hydration of medium- and short-chained fatty enoyl-CoA thioesters from 4 carbons long (C4) up to C16. Has high substrate specificity for crotonyl-CoA ((2E)-butenoyl-CoA) and moderate specificity for acryloyl-CoA, 3-methylcrotonyl-CoA (3-methyl-(2E)-butenoyl-CoA) and methacrylyl-CoA ((2E)-2-methylpropenoyl-CoA). Can bind tiglyl-CoA (2-methylcrotonoyl-CoA), but hydrates only a small amount of this substrate. Plays a key role in the beta-oxidation spiral of short- and medium-chain fatty acid oxidation. At a lower rate than the hydratase reaction, catalyzes the isomerase reaction of trans-3-enoyl-CoA species (such as (3E)-hexenoyl-CoA) to trans-2-enoyl-CoA species (such as (2E)-hexenoyl-CoA), which are subsequently hydrated to 3(S)-3-hydroxyacyl-CoA species (such as (3S)-hydroxyhexanoyl-CoA). The sequence is that of Enoyl-CoA hydratase, mitochondrial (ECHS1) from Bos taurus (Bovine).